Consider the following 385-residue polypeptide: 1-deoxy-D-xylulose 5-phosphate reductoisomerase (385 aa).

Residues Thr-10, Gly-11, Ser-12, Ile-13, Lys-37, and Asn-124 each contribute to the NADPH site. Lys-125 provides a ligand contact to 1-deoxy-D-xylulose 5-phosphate. Residue Glu-126 coordinates NADPH. Position 150 (Asp-150) interacts with Mn(2+). 1-deoxy-D-xylulose 5-phosphate contacts are provided by Ser-151, Glu-152, Ser-176, and His-199. Residue Glu-152 coordinates Mn(2+). NADPH is bound at residue Gly-205. Ser-212, Asn-217, Lys-218, and Glu-221 together coordinate 1-deoxy-D-xylulose 5-phosphate. Glu-221 lines the Mn(2+) pocket.

The protein belongs to the DXR family. Requires Mg(2+) as cofactor. Mn(2+) serves as cofactor.

The enzyme catalyses 2-C-methyl-D-erythritol 4-phosphate + NADP(+) = 1-deoxy-D-xylulose 5-phosphate + NADPH + H(+). It functions in the pathway isoprenoid biosynthesis; isopentenyl diphosphate biosynthesis via DXP pathway; isopentenyl diphosphate from 1-deoxy-D-xylulose 5-phosphate: step 1/6. Functionally, catalyzes the NADPH-dependent rearrangement and reduction of 1-deoxy-D-xylulose-5-phosphate (DXP) to 2-C-methyl-D-erythritol 4-phosphate (MEP). The chain is 1-deoxy-D-xylulose 5-phosphate reductoisomerase from Clostridium botulinum (strain Okra / Type B1).